The sequence spans 401 residues: Imidazolonepropionase (401 aa).

H66 and H68 together coordinate Fe(3+). 2 residues coordinate Zn(2+): H66 and H68. Positions 75, 138, and 171 each coordinate 4-imidazolone-5-propanoate. Y138 lines the N-formimidoyl-L-glutamate pocket. Residue H236 coordinates Fe(3+). H236 lines the Zn(2+) pocket. Q239 is a 4-imidazolone-5-propanoate binding site. Residue D311 participates in Fe(3+) binding. D311 is a binding site for Zn(2+). The N-formimidoyl-L-glutamate site is built by N313 and G315. T316 serves as a coordination point for 4-imidazolone-5-propanoate.

It belongs to the metallo-dependent hydrolases superfamily. HutI family. It depends on Zn(2+) as a cofactor. Fe(3+) serves as cofactor.

The protein localises to the cytoplasm. The catalysed reaction is 4-imidazolone-5-propanoate + H2O = N-formimidoyl-L-glutamate. It participates in amino-acid degradation; L-histidine degradation into L-glutamate; N-formimidoyl-L-glutamate from L-histidine: step 3/3. Functionally, catalyzes the hydrolytic cleavage of the carbon-nitrogen bond in imidazolone-5-propanoate to yield N-formimidoyl-L-glutamate. It is the third step in the universal histidine degradation pathway. The chain is Imidazolonepropionase from Pseudomonas putida (strain ATCC 47054 / DSM 6125 / CFBP 8728 / NCIMB 11950 / KT2440).